Consider the following 377-residue polypeptide: Glutamate 5-kinase (377 aa).

Residue Lys22 participates in ATP binding. Substrate is bound by residues Ser62, Asp149, and Asn161. ATP is bound by residues 181-182 (TD) and 223-229 (TGGMVTK). The region spanning 285-363 (RGTIVVDAGA…AQLKRFLGPQ (79 aa)) is the PUA domain.

Belongs to the glutamate 5-kinase family.

The protein localises to the cytoplasm. The enzyme catalyses L-glutamate + ATP = L-glutamyl 5-phosphate + ADP. It functions in the pathway amino-acid biosynthesis; L-proline biosynthesis; L-glutamate 5-semialdehyde from L-glutamate: step 1/2. Catalyzes the transfer of a phosphate group to glutamate to form L-glutamate 5-phosphate. This chain is Glutamate 5-kinase, found in Bifidobacterium longum (strain DJO10A).